Here is a 91-residue protein sequence, read N- to C-terminus: Large ribosomal subunit protein bL27 (91 aa).

It belongs to the bacterial ribosomal protein bL27 family. In terms of assembly, part of the 50S ribosomal subunit. Contacts protein L18.

Binds the 5S and 23S rRNAs and also the tRNA in the P site. The polypeptide is Large ribosomal subunit protein bL27 (rpmA) (Deinococcus radiodurans (strain ATCC 13939 / DSM 20539 / JCM 16871 / CCUG 27074 / LMG 4051 / NBRC 15346 / NCIMB 9279 / VKM B-1422 / R1)).